Reading from the N-terminus, the 716-residue chain is DEAD-box ATP-dependent RNA helicase 31 (716 aa).

The tract at residues 99-188 is disordered; sequence GILKSDDEDE…LRLEDESSDE (90 aa). Positions 110–121 are enriched in basic and acidic residues; it reads DRSRGRNQEKRG. Polar residues predominate over residues 144 to 153; sequence SRIQGKSSEA. Basic and acidic residues predominate over residues 155–188; that stretch reads FRGRKETSFSRDREDEKGLRKREDLRLEDESSDE. The Q motif signature appears at 248-276; sequence TRFDHYPLSPLSLKAIKDAGYETMTVVQE. A Helicase ATP-binding domain is found at 279–462; it reads LPIILKGKDV…LVALRRDHEF (184 aa). 292–299 lines the ATP pocket; the sequence is AKTGTGKT. Residues 410–413 carry the DEAD box motif; that stretch reads DEAD. The region spanning 497–643 is the Helicase C-terminal domain; it reads LREHIMGNVD…IDPETVKKVQ (147 aa).

Belongs to the DEAD box helicase family.

It catalyses the reaction ATP + H2O = ADP + phosphate + H(+). The sequence is that of DEAD-box ATP-dependent RNA helicase 31 (RH31) from Arabidopsis thaliana (Mouse-ear cress).